A 255-amino-acid polypeptide reads, in one-letter code: (R)-S-adenosyl-L-methionine hydrolase (255 aa).

Residues Asp9, Asp70, and Asn186 each contribute to the adenosine site. The (R)-S-adenosyl-L-methionine site is built by Asn186, Ser227, Glu232, and Val235. An adenosine-binding site is contributed by Val235.

This sequence belongs to the SAM hydrolase / SAM-dependent halogenase family. Homotrimer.

It carries out the reaction (R)-S-adenosyl-L-methionine + H2O = adenosine + L-methionine + H(+). Catalyzes the hydrolysis of S-adenosyl-L-methionine (SAM) into adenosine and L-methionine. Does not have chlorinase or fluorinase activity. The chain is (R)-S-adenosyl-L-methionine hydrolase from Thermus thermophilus (strain ATCC 27634 / DSM 579 / HB8).